The primary structure comprises 332 residues: MQTGSTLHDDRTSVSALGGLGARARGASGRLLPEIWMQNGAKRVEQALARLLCAEDHGETELMAAMRYATLHGGKRTRALLCLAAGALADTPAHILDDVGAAIEMMHACTLVHDDLPAMDDDVLRRGLPTVHVKFGEATAILVGDALQAHAFLTLASLDAPGDNRIALVRELAQAVSAEGAAGGQAMDLSLVGKHVELDRIVAMHRMKCGALVRASVRMGALCAIAEDAADATLYCALDHYSACFGLALQVVDDILDATADTATLGKTPGKDAAAQKPTCASIMGLQAARQFALDLLCEAGEAIAPLGPRAERLAQMLQRASAYLFKHAPSA.

3 residues coordinate isopentenyl diphosphate: lysine 75, arginine 78, and histidine 107. Positions 114 and 120 each coordinate Mg(2+). Arginine 125 lines the (2E)-geranyl diphosphate pocket. An isopentenyl diphosphate-binding site is contributed by arginine 126. Residues lysine 208, glutamine 250, and lysine 267 each contribute to the (2E)-geranyl diphosphate site.

Belongs to the FPP/GGPP synthase family. Requires Mg(2+) as cofactor.

It localises to the cytoplasm. It carries out the reaction isopentenyl diphosphate + (2E)-geranyl diphosphate = (2E,6E)-farnesyl diphosphate + diphosphate. In Sinorhizobium fredii (strain NBRC 101917 / NGR234), this protein is Probable farnesyl diphosphate synthase.